A 949-amino-acid polypeptide reads, in one-letter code: SGGFDFSFLPQPPQEKAVGLGPGPMGLMGPRGPPGASGAPGPQGFQGPAGEPGEPGQTGPAGARGPAGPPGKAGGVVGPQGARGFPGTPGLPGFKGIRGHNGLDGLKGEPGAPGENGTPGQTGARGLPGERGRVGAPGPAGRGSDGSVGPVGPAGPIGSAGPPGFPGAPGPKGELGPVGNTGPAGPAGPRGEQGLPGVSGPVGPPGNPGANGLTGAKGAAGLPGVAGAPGLPGPRGIPGPVGASGATGARGLVGEPGPAGSKGESGGKGEPGSAGPQGPPGSSGEEGKRGPNGEGSTGPTGPPGLRGGPGSRGLPGADGRAGVIGLAGARGASGPAGVRGPSGDTGRPGEPGLMGARGLPGSPGNVGPAGKEGPVGLPGIDGRPGPIGPAGARGEAGNIGFPGPKGPAGDPGKGNRGAPGPDGNNGAQGPPGLQGVQGGKGEQGPAGPPGFQGLPGPAGTTGEAGKPGERGPGEFGLPGPAGPRGERGPPGESGAVGPSGAIGSRGPSGPPGPDGNKGEPGVVGAPGTAGPAGSGGLPGERGAAGIPGGKGEKGETGLRGEVGTTGRDGARGAPGAVGAPGPAGATGDRGEAGAAGPAGPAGPRGSPGERGEVGPAGPNGFAGPAGAAGQPGAKGERGTKGPKGENGIVGPTGPVGSAGPAGPNGPAGPAGSRGDGGPPGVTGFPGAAGRTGPPGPSGITGPPGPPGAAGKEGLRGPRGDQGPVGRGETGAGGPPGFTGEKGPSGEPGTAGPPGTAGPQGLLGAPGILGLPGSRGERGLPGVAGAVGEPGPLGISGPPGARGGKHGNRGEPGPVGSVGPVGALGPRGPSGPQGIRGDKGEPGEKGPRGLPGLKGHNGLQGLPGLAGQHGDQGSPGPVGPAGPRGPAGPSGPPGKDGRTGHPGAVGPAGIRGSQGSQGPSGPAGPPGPPGPPGASGGGYDFGYEGDFYRA.

Residues 1–949 (SGGFDFSFLP…FGYEGDFYRA (949 aa)) are disordered. A 4-hydroxyproline mark is found at proline 10, proline 13, proline 34, and proline 40. The segment covering 27–66 (LMGPRGPPGASGAPGPQGFQGPAGEPGEPGQTGPAGARGP) has biased composition (low complexity). Lysine 95 carries the post-translational modification 5-hydroxylysine; alternate. Residue lysine 95 is glycosylated (O-linked (Gal...) hydroxylysine; alternate). Composition is skewed to low complexity over residues 147–162 (SVGPVGPAGPIGSAGP) and 208–229 (PGANGLTGAKGAAGLPGVAGAP). A compositionally biased stretch (gly residues) spans 263–272 (GESGGKGEPG). The span at 273–283 (SAGPQGPPGSS) shows a compositional bias: low complexity. The span at 292-313 (NGEGSTGPTGPPGLRGGPGSRG) shows a compositional bias: gly residues. Residues proline 348 and proline 351 each carry the 4-hydroxyproline modification. The segment covering 377-396 (LPGIDGRPGPIGPAGARGEA) has biased composition (low complexity). Gly residues predominate over residues 435–444 (GVQGGKGEQG). Composition is skewed to low complexity over residues 490 to 507 (PGESGAVGPSGAIGSRGP) and 519 to 529 (EPGVVGAPGTA). The segment covering 530-539 (GPAGSGGLPG) has biased composition (gly residues). 2 stretches are compositionally biased toward low complexity: residues 562–606 (VGTT…PRGS) and 613–633 (VGPAGPNGFAGPAGAAGQPGA). Residues 634 to 643 (KGERGTKGPK) show a composition bias toward basic and acidic residues. Low complexity predominate over residues 651-661 (PTGPVGSAGPA). Over residues 671 to 680 (GSRGDGGPPG) the composition is skewed to gly residues. Low complexity predominate over residues 682–691 (TGFPGAAGRT). Positions 722 to 736 (GPVGRGETGAGGPPG) are enriched in gly residues. Composition is skewed to low complexity over residues 737 to 771 (FTGEKGPSGEPGTAGPPGTAGPQGLLGAPGILGLP), 779 to 792 (LPGVAGAVGEPGPL), and 810 to 825 (EPGPVGSVGPVGALGP). The segment covering 835-846 (RGDKGEPGEKGP) has biased composition (basic and acidic residues). A compositionally biased stretch (pro residues) spans 921–931 (PAGPPGPPGPP).

The protein belongs to the fibrillar collagen family. In terms of assembly, trimers of one alpha 2(I) and two alpha 1(I) chains. Interacts (via C-terminus) with TMEM131 (via PapD-L domain); the interaction is direct and is involved in assembly and TRAPPIII ER-to-Golgi transport complex-dependent secretion of collagen. In terms of processing, prolines at the third position of the tripeptide repeating unit (G-X-Y) are hydroxylated in some or all of the chains. In terms of tissue distribution, expressed in bones.

The protein localises to the secreted. It is found in the extracellular space. Its subcellular location is the extracellular matrix. Its function is as follows. Type I collagen is a member of group I collagen (fibrillar forming collagen). In Acratocnus ye (Hispaniolan ground sloth), this protein is Collagen alpha-2(I) chain.